Here is a 438-residue protein sequence, read N- to C-terminus: Probable inactive protein kinase 38 (438 aa).

Residues 77-340 (PRFRLALGKG…FTELQPQYFL (264 aa)) form the Protein kinase domain.

The protein belongs to the protein kinase superfamily. Tyr protein kinase family.

This chain is Probable inactive protein kinase 38 (36), found in Equus caballus (Horse).